Reading from the N-terminus, the 184-residue chain is Ribosome-recycling factor (184 aa).

Belongs to the RRF family.

It is found in the cytoplasm. Responsible for the release of ribosomes from messenger RNA at the termination of protein biosynthesis. May increase the efficiency of translation by recycling ribosomes from one round of translation to another. This Thermoanaerobacter pseudethanolicus (strain ATCC 33223 / 39E) (Clostridium thermohydrosulfuricum) protein is Ribosome-recycling factor.